The following is a 594-amino-acid chain: Developmental and secondary metabolism regulator veA (594 aa).

Positions 24-220 (GRRLFYRIDV…AEQGTRVRIR (197 aa)) constitute a Velvet domain. Residues 38–43 (EKCRAC) carry the Nuclear localization signal motif. 2 disordered regions span residues 40 to 59 (CRAC…VDPP) and 210 to 558 (MAEQ…DVEE). Residues 217–229 (VRIRRDVRMRRRD) are compositionally biased toward basic residues. A compositionally biased stretch (pro residues) spans 296-307 (APPPPNPPPPGF). The span at 327–351 (SHSQYQQPTSSSSSSEQVSSVPQSP) shows a compositional bias: low complexity. Positions 352 to 362 (AYSSHAAQQHY) are enriched in polar residues. Residues 374–383 (PERRLSDHRS) show a composition bias toward basic and acidic residues. A compositionally biased stretch (low complexity) spans 384–403 (SQPNNHPQQSPHQHSYSHRS). Basic and acidic residues predominate over residues 405 to 416 (PQRERFMPDSRR). Residues 457–506 (VADTQATPHLPPIRWPRPNMNLPSPPSEHQEALQPLQPAPLHYESQTHQQ) are PEST. Residues 523-538 (YSYGYSYSHNHSHGYG) are compositionally biased toward low complexity.

This sequence belongs to the velvet family. VeA subfamily. Component of the heterotrimeric velvet complex composed of LAEA, VEA and VELB; VEA acting as a bridging protein between LAEA and VELB.

The protein resides in the nucleus. Its subcellular location is the cytoplasm. Its function is as follows. Component of the velvet transcription factor complex that controls sexual/asexual developmental ratio in response to light, promoting sexual development in the darkness while stimulating asexual sporulation under illumination. The velvet complex acts as a global regulator for secondary metabolite gene expression. Regulates of the response to reactive oxygen species (ROS) stress. The chain is Developmental and secondary metabolism regulator veA from Pyricularia oryzae (strain 70-15 / ATCC MYA-4617 / FGSC 8958) (Rice blast fungus).